The following is a 329-amino-acid chain: Serine dehydratase-like (329 aa).

M1 bears the N-acetylmethionine mark. K48 bears the N6-(pyridoxal phosphate)lysine mark.

It belongs to the serine/threonine dehydratase family. Monomer. Homodimer. The cofactor is pyridoxal 5'-phosphate. Abundantly expressed in liver.

The catalysed reaction is L-serine = pyruvate + NH4(+). It carries out the reaction L-threonine = 2-oxobutanoate + NH4(+). The enzyme catalyses L-glutamate = D-glutamate. Catalyzes the pyridoxal-phosphate-dependent dehydrative deamination of L-threonine and L-serine to ammonia and alpha-ketobutyrate and pyruvate, respectively. Also exhibits racemase activity towards L-glutamate and D-glutamate. This chain is Serine dehydratase-like (Sdsl), found in Mus musculus (Mouse).